A 246-amino-acid polypeptide reads, in one-letter code: Ribonuclease PH (246 aa).

Phosphate-binding positions include Arg91 and 129 to 131 (GTR).

Belongs to the RNase PH family. As to quaternary structure, homohexameric ring arranged as a trimer of dimers.

It catalyses the reaction tRNA(n+1) + phosphate = tRNA(n) + a ribonucleoside 5'-diphosphate. Its function is as follows. Phosphorolytic 3'-5' exoribonuclease that plays an important role in tRNA 3'-end maturation. Removes nucleotide residues following the 3'-CCA terminus of tRNAs; can also add nucleotides to the ends of RNA molecules by using nucleoside diphosphates as substrates, but this may not be physiologically important. Probably plays a role in initiation of 16S rRNA degradation (leading to ribosome degradation) during starvation. In Paraburkholderia phytofirmans (strain DSM 17436 / LMG 22146 / PsJN) (Burkholderia phytofirmans), this protein is Ribonuclease PH.